Consider the following 720-residue polypeptide: DNA ligase (720 aa).

NAD(+) is bound by residues 57–61 (DAEYD), 106–107 (SL), and E140. The active-site N6-AMP-lysine intermediate is K142. NAD(+) is bound by residues R163, E200, K316, and K340. 4 residues coordinate Zn(2+): C434, C437, C458, and C464. Positions 643–720 (AAASPVSGKT…TEDEWFELVG (78 aa)) constitute a BRCT domain.

The protein belongs to the NAD-dependent DNA ligase family. LigA subfamily. Mg(2+) is required as a cofactor. Mn(2+) serves as cofactor.

The catalysed reaction is NAD(+) + (deoxyribonucleotide)n-3'-hydroxyl + 5'-phospho-(deoxyribonucleotide)m = (deoxyribonucleotide)n+m + AMP + beta-nicotinamide D-nucleotide.. Functionally, DNA ligase that catalyzes the formation of phosphodiester linkages between 5'-phosphoryl and 3'-hydroxyl groups in double-stranded DNA using NAD as a coenzyme and as the energy source for the reaction. It is essential for DNA replication and repair of damaged DNA. In Xanthobacter autotrophicus (strain ATCC BAA-1158 / Py2), this protein is DNA ligase.